The chain runs to 66 residues: Large ribosomal subunit protein bL35 (66 aa).

This sequence belongs to the bacterial ribosomal protein bL35 family.

This Synechococcus sp. (strain RCC307) protein is Large ribosomal subunit protein bL35.